A 114-amino-acid chain; its full sequence is UPF0342 protein SSP0954 (114 aa).

The protein belongs to the UPF0342 family.

The polypeptide is UPF0342 protein SSP0954 (Staphylococcus saprophyticus subsp. saprophyticus (strain ATCC 15305 / DSM 20229 / NCIMB 8711 / NCTC 7292 / S-41)).